The following is a 276-amino-acid chain: MIAAGAKSLLGLSMASPKGIFDSNSMSNSRSVVVVRACVSMDGSQTLSHNKNGSIPEVKSINGHTGQKQGPLSTVGNSTNIKWHECSVEKVDRQRLLDQKGCVIWVTGLSGSGKSTLACALNQMLYQKGKLCYILDGDNVRHGLNRDLSFKAEDRAENIRRVGEVAKLFADAGIICIASLISPYRTDRDACRSLLPEGDFVEVFMDVPLSVCEARDPKGLYKLARAGKIKGFTGIDDPYEPPLNCEISLGREGGTSPIEMAEKVVGYLDNKGYLQA.

The N-terminal 38 residues, 1-38, are a transit peptide targeting the chloroplast; that stretch reads MIAAGAKSLLGLSMASPKGIFDSNSMSNSRSVVVVRAC. The tract at residues 46–74 is disordered; sequence TLSHNKNGSIPEVKSINGHTGQKQGPLST. The span at 62-74 shows a compositional bias: polar residues; it reads NGHTGQKQGPLST. 108 to 116 lines the ATP pocket; the sequence is GLSGSGKST. Residues Asp-138, Arg-141, Arg-155, Asn-158, 181–182, and Gly-231 contribute to the substrate site; that span reads IS. Catalysis depends on Ser-182, which acts as the Phosphoserine intermediate.

It belongs to the APS kinase family. Homodimer; disulfide-linked. Interacts with APK2. As to expression, expressed in root vasculature, root tips, leaf epidermal and guard cells, pollen grains and funiculus of developing seeds.

It localises to the plastid. It is found in the chloroplast. It carries out the reaction adenosine 5'-phosphosulfate + ATP = 3'-phosphoadenylyl sulfate + ADP + H(+). The protein operates within sulfur metabolism; hydrogen sulfide biosynthesis; sulfite from sulfate: step 2/3. Catalyzes the synthesis of activated sulfate. Essential for plant reproduction and viability. Required for the production of glucosinolates. In Arabidopsis thaliana (Mouse-ear cress), this protein is Adenylyl-sulfate kinase 1, chloroplastic (APK1).